The following is a 330-amino-acid chain: MKVVFAGTPGFARVALQRLLDAGFSLPLVLTRPDQPAGRGLQWQASPVKQCALAHGLAVAQPRSLRLDGRYPQDAAAARAALLAAQAEVMVVAAYGLILPQWVLDLPARGCLNIHASLLPRWRGAAPIQRAIEAGDTHTGVTIMQMDAGLDTGAMLLSQGSAIAPTDTTATLHDRLAALGADLIVQALEKMAAGADLPALAQPAQGVAYARKIEKSESSIDWSLPAQRIGQRIRAFDPAPGASTTCNGTSIKLWGYAIDGATIDGQRGVPRMHPGQILSADDSGIAVACGQGTALRLTVLQRAGGKRLAAADFLRGFALQPGMWLGAARA.

117-120 (SLLP) lines the (6S)-5,6,7,8-tetrahydrofolate pocket.

Belongs to the Fmt family.

It catalyses the reaction L-methionyl-tRNA(fMet) + (6R)-10-formyltetrahydrofolate = N-formyl-L-methionyl-tRNA(fMet) + (6S)-5,6,7,8-tetrahydrofolate + H(+). In terms of biological role, attaches a formyl group to the free amino group of methionyl-tRNA(fMet). The formyl group appears to play a dual role in the initiator identity of N-formylmethionyl-tRNA by promoting its recognition by IF2 and preventing the misappropriation of this tRNA by the elongation apparatus. The chain is Methionyl-tRNA formyltransferase from Verminephrobacter eiseniae (strain EF01-2).